The primary structure comprises 183 residues: Peptide deformylase-like (183 aa).

The active site involves Glu-140.

It belongs to the polypeptide deformylase family.

The polypeptide is Peptide deformylase-like (Rickettsia conorii (strain ATCC VR-613 / Malish 7)).